A 171-amino-acid chain; its full sequence is 3-hydroxydecanoyl-[acyl-carrier-protein] dehydratase (171 aa).

Histidine 70 is an active-site residue.

This sequence belongs to the thioester dehydratase family. FabA subfamily. Homodimer.

It localises to the cytoplasm. The catalysed reaction is a (3R)-hydroxyacyl-[ACP] = a (2E)-enoyl-[ACP] + H2O. The enzyme catalyses (3R)-hydroxydecanoyl-[ACP] = (2E)-decenoyl-[ACP] + H2O. It carries out the reaction (2E)-decenoyl-[ACP] = (3Z)-decenoyl-[ACP]. It functions in the pathway lipid metabolism; fatty acid biosynthesis. Necessary for the introduction of cis unsaturation into fatty acids. Catalyzes the dehydration of (3R)-3-hydroxydecanoyl-ACP to E-(2)-decenoyl-ACP and then its isomerization to Z-(3)-decenoyl-ACP. Can catalyze the dehydratase reaction for beta-hydroxyacyl-ACPs with saturated chain lengths up to 16:0, being most active on intermediate chain length. The chain is 3-hydroxydecanoyl-[acyl-carrier-protein] dehydratase from Photobacterium profundum (strain SS9).